Consider the following 689-residue polypeptide: Protein asunder (689 aa).

Residues 521–550 (NGARLKLSKAKDQYRLLYRELEQLIQLNAT) are a coiled coil. Disordered stretches follow at residues 591–619 (SPER…SKRR) and 665–689 (GTKD…SVRS). The span at 599–614 (SSVGASGSSNSNSLLK) shows a compositional bias: low complexity. The Nuclear localization signal (NLS) signature appears at 613–619 (LKASKRR).

It belongs to the Integrator subunit 13 family. As to quaternary structure, belongs to the multiprotein complex Integrator, at least composed of IntS1, IntS2, IntS3, IntS4, omd/IntS5, IntS6, defl/IntS7, IntS8, IntS9, IntS10, IntS11, IntS12, asun/IntS13, IntS14 and IntS15. The core complex associates with protein phosphatase 2A subunits mts/PP2A and Pp2A-29B, to form the Integrator-PP2A (INTAC) complex. Phosphorylated.

Its subcellular location is the nucleus. It is found in the cytoplasm. The protein resides in the perinuclear region. In terms of biological role, component of the integrator complex, a multiprotein complex that terminates RNA polymerase II (Pol II) transcription in the promoter-proximal region of genes. The integrator complex provides a quality checkpoint during transcription elongation by driving premature transcription termination of transcripts that are unfavorably configured for transcriptional elongation: the complex terminates transcription by (1) catalyzing dephosphorylation of the C-terminal domain (CTD) of Pol II subunit Polr2A/Rbp1 and Spt5, and (2) degrading the exiting nascent RNA transcript via endonuclease activity. The integrator complex is also involved in the 3'-end processing of the U7 snRNA, and also the spliceosomal snRNAs U1, U2, U4 and U5. The sequence is that of Protein asunder (asun) from Drosophila sechellia (Fruit fly).